Here is a 145-residue protein sequence, read N- to C-terminus: Chaperonin GroEL (145 aa).

It belongs to the chaperonin (HSP60) family. As to quaternary structure, forms a cylinder of 14 subunits composed of two heptameric rings stacked back-to-back. Interacts with the co-chaperonin GroES.

It localises to the cytoplasm. It catalyses the reaction ATP + H2O + a folded polypeptide = ADP + phosphate + an unfolded polypeptide.. Together with its co-chaperonin GroES, plays an essential role in assisting protein folding. The GroEL-GroES system forms a nano-cage that allows encapsulation of the non-native substrate proteins and provides a physical environment optimized to promote and accelerate protein folding. This is Chaperonin GroEL from Thermus thermophilus.